The sequence spans 407 residues: Sensor histidine kinase YdfH (407 aa).

Residues 1–25 (MLIRNPFKDKYYSHDRRALNMLALR) lie on the Cytoplasmic side of the membrane. Helical transmembrane passes span 26–46 (VPGL…QFVS) and 47–67 (GGWS…FALL). Residues 68–78 (HWHSYRWVKKR) lie on the Cytoplasmic side of the membrane. 2 consecutive transmembrane segments (helical) span residues 79 to 99 (VILY…LMTG) and 100 to 120 (FFIL…IGMA). Residues 121-125 (DRRRT) are Cytoplasmic-facing. The helical transmembrane segment at 126–146 (FLILYLLLLLVINSAYHLHKG) threads the bilayer. Residues 147–150 (EVLH) lie on the Extracellular side of the membrane. The chain crosses the membrane as a helical span at residues 151–171 (FIVIAAPIMIVIITYAATFFA). At 172 to 407 (QVDEKIKAQL…VPIQGEMQDE (236 aa)) the chain is on the cytoplasmic side. A Histidine kinase domain is found at 201–402 (ERQRMARDLH…QIEITVPIQG (202 aa)). At H210 the chain carries Phosphohistidine; by autocatalysis.

The protein localises to the cell membrane. It catalyses the reaction ATP + protein L-histidine = ADP + protein N-phospho-L-histidine.. Its function is as follows. Member of the two-component regulatory system YdfH/YdfI. May activate YdfI by phosphorylation. The protein is Sensor histidine kinase YdfH (ydfH) of Bacillus subtilis (strain 168).